We begin with the raw amino-acid sequence, 294 residues long: Non-selective voltage-gated ion channel VDAC2 (294 aa).

N-acetylalanine is present on Ala2. The ATP site is built by Lys23 and Lys31. Residue Lys31 is modified to N6-acetyllysine; alternate. Position 31 is an N6-succinyllysine; alternate (Lys31). Lys31 is covalently cross-linked (Glycyl lysine isopeptide (Lys-Gly) (interchain with G-Cter in ubiquitin); alternate). 2 consecutive transmembrane segments (beta stranded) span residues 37–46 (LVKLDVKTKS) and 50–58 (VEFSTSGSS). Residue Lys64 forms a Glycyl lysine isopeptide (Lys-Gly) (interchain with G-Cter in ubiquitin) linkage. The beta stranded transmembrane segment at 65–75 (VTGTLETKYKW) threads the bilayer. Tyr78 bears the Phosphotyrosine mark. Beta stranded transmembrane passes span 80–87 (LTFTEKWN), 91–100 (TLGTEIAIED), and 106–115 (LKLTFDTTFS). Thr118 bears the Phosphothreonine mark. The residue at position 120 (Lys120) is an N6-acetyllysine; alternate. A Glycyl lysine isopeptide (Lys-Gly) (interchain with G-Cter in ubiquitin); alternate cross-link involves residue Lys120. Residue Lys121 forms a Glycyl lysine isopeptide (Lys-Gly) (interchain with G-Cter in ubiquitin) linkage. The next 4 membrane-spanning stretches (beta stranded) occupy residues 122–131 (SGKIKSSYKR), 134–141 (INLGCDVD), 148–156 (AIHGSAVFG), and 161–169 (LAGYQMTFD). Lys172 participates in a covalent cross-link: Glycyl lysine isopeptide (Lys-Gly) (interchain with G-Cter in ubiquitin). The next 6 beta stranded transmembrane spans lie at 174 to 186 (KLTR…GYRT), 189 to 196 (FQLHTNVN), 200 to 209 (EFGGSIYQKV), 213 to 222 (LDTSVNLAWT), 229 to 238 (RFGIAAKYQL), and 242 to 249 (ASISAKVN). Position 251 is a phosphoserine (Ser251). NAD(+) contacts are provided by residues 253 to 255 (LIG) and 271 to 275 (SALVD). 2 beta stranded membrane passes run 253–262 (LIGVGYTQTL) and 265–274 (GVKLTLSALV). Position 277 is an N6-acetyllysine; alternate (Lys277). Residue Lys277 forms a Glycyl lysine isopeptide (Lys-Gly) (interchain with G-Cter in ubiquitin); alternate linkage. Residues 284–293 (HKLGLALELE) traverse the membrane as a beta stranded segment.

The protein belongs to the eukaryotic mitochondrial porin family. In terms of assembly, monomer, homodimer and higher order oligomers; formation of higher order structures is necessary for scramblase activity. Interacts with ARMC12 in a TBC1D21-dependent manner. Interacts with KLC3. Interacts with SPATA33. Interacts with PPP3CC in a SPATA33-dependent manner. Ubiquitinated by PRKN during mitophagy, leading to its degradation and enhancement of mitophagy. Deubiquitinated by USP30.

It is found in the mitochondrion outer membrane. It localises to the membrane. The enzyme catalyses chloride(in) = chloride(out). The catalysed reaction is K(+)(in) = K(+)(out). It carries out the reaction a 1,2-diacyl-sn-glycero-3-phospho-L-serine(in) = a 1,2-diacyl-sn-glycero-3-phospho-L-serine(out). It catalyses the reaction a 1,2-diacyl-sn-glycero-3-phosphocholine(in) = a 1,2-diacyl-sn-glycero-3-phosphocholine(out). The enzyme catalyses a 1,2-diacyl-sn-glycero-3-phospho-(1D-myo-inositol)(in) = a 1,2-diacyl-sn-glycero-3-phospho-(1D-myo-inositol)(out). Non-selective voltage-gated ion channel that mediates the transport of anions and cations through the mitochondrion outer membrane and plasma membrane. The channel adopts an open conformation at zero mV and a closed conformation at both positive and negative potentials. There are two populations of channels; the main that functions in a lower open-state conductance with lower ion selectivity, that switch, in a voltage-dependent manner, from the open to a low-conducting 'closed' state and the other that has a normal ion selectivity in the typical high conductance, 'open' state. Binds various lipids, including the sphingolipid ceramide, the phospholipid phosphatidylcholine, and the sterols cholesterol and oxysterol. Binding of ceramide promotes the mitochondrial outer membrane permeabilization (MOMP) apoptotic pathway. In terms of biological role, catalyzes the scrambling of phospholipids across the outer mitochondrial membrane; the mechanism is unrelated to channel activity and is capable of translocating both anionic and zwitterionic phospholipids. The polypeptide is Non-selective voltage-gated ion channel VDAC2 (Bos taurus (Bovine)).